The chain runs to 854 residues: MTDTTLPPEGEAHDRIEPVDIQQEMQRSYIDYAMSVIVGRALPEVRDGLKPVHRRVLYAMYDSASSDRSHAKSARSVAETMGNYHPHGDASIYDTLVRMAQPWSLRYPLVDGQGNFGSPGNDPPAAMRYTEARLTPLAMEMLREIDEETVDFIPNYDGRVQEPTVLPSRFPNLLANGSRGIAVGMATNNPPHNLGELAEAVYWCLENYEADEEATCEAVMERVKGPDFPTSGLIVGTQGIEDTYKTGRGSIKMRGVVEIEEDSRGRTSIVITELPYQVNHDNFITSIAEQVRDGKLAGISNIEDQSSDRVGLRIVVELKRDAVAKVVLNNLYKHTQLQTSFGANMLSIVDGVPRTLRLDQLIRLYVDHQLDVIVRRTRYRLRKANERAHILRGLVKALDALDEVIALIRASQTVDIARAGLIELLDIDDIQAQAILDMQLRRLAALERQKIVDDLAKIEAEIADLEDILAKPERQRGIVRDELKEIVDKHGDARRTRIVPADGQVSDEDLIAREDVVVTITETGYAKRTKTDLYHSQKRGGKGVQGAGLKQDDMVNHFFVCSTHDWILFFTTQGRVYRAKAYELPEASRTARGQHVANLLAFQPEERIAQVIQIKSYEDAPYLVLATRNGLVKKSKLSDFDSNRSGGIVAINLREGDELVGAVLCSAEDDLLLVSANRQSIRFSATDEALRPMGRATSGVQGMRFNEDDRLLSLNVVRPDTYLLVATSGGYAKRTSIDEYSVQGRGGKGILTIQYDRKRGSLVGALIVDDDTELYAITSTGGVIRTAARQVRKAGRQTKGVRLMNLAEGDTLIAIARNGRGRGGRVDQRIRRGHRRVTRGVMETLRSRKVLGPS.

One can recognise a Topo IIA-type catalytic domain in the interval 42 to 510 (LPEVRDGLKP…ADGQVSDEDL (469 aa)). Residue Tyr129 is the O-(5'-phospho-DNA)-tyrosine intermediate of the active site. A GyrA-box motif is present at residues 537–543 (QKRGGKG).

It belongs to the type II topoisomerase GyrA/ParC subunit family. In terms of assembly, heterotetramer, composed of two GyrA and two GyrB chains. In the heterotetramer, GyrA contains the active site tyrosine that forms a transient covalent intermediate with DNA, while GyrB binds cofactors and catalyzes ATP hydrolysis.

It is found in the cytoplasm. The catalysed reaction is ATP-dependent breakage, passage and rejoining of double-stranded DNA.. Its activity is regulated as follows. DNA supercoiling is inhibited by the coumarin antibiotic novobiocin. Also inhibited by the fluoroquinolones ciprofloxacin and moxifloxacin. A type II topoisomerase that negatively supercoils closed circular double-stranded (ds) DNA in an ATP-dependent manner to modulate DNA topology and maintain chromosomes in an underwound state; also catalyzes the interconversion of other topological isomers of double-stranded DNA rings, including catenanes. At comparable concentrations has a stronger decatenation activity than E.coli, which is inhibited by ciprofloxacin and novobiocin. Cleaves dsDNA at the sequence 5'-AT/GGCC-3', leaving a 4 base overhang. Relaxes negatively supercoiled DNA in an ATP-independent manner. Its function is as follows. Negative supercoiling favors strand separation, and DNA replication, transcription, recombination and repair, all of which involve strand separation. Type II topoisomerases break and join 2 DNA strands simultaneously in an ATP-dependent manner. This chain is DNA gyrase subunit A, found in Mycolicibacterium smegmatis (Mycobacterium smegmatis).